The primary structure comprises 564 residues: Arginine--tRNA ligase (564 aa).

A 'HIGH' region motif is present at residues 136 to 146 (ANPTGPLHMGN).

The protein belongs to the class-I aminoacyl-tRNA synthetase family. As to quaternary structure, monomer.

Its subcellular location is the cytoplasm. The enzyme catalyses tRNA(Arg) + L-arginine + ATP = L-arginyl-tRNA(Arg) + AMP + diphosphate. This is Arginine--tRNA ligase from Acetivibrio thermocellus (strain ATCC 27405 / DSM 1237 / JCM 9322 / NBRC 103400 / NCIMB 10682 / NRRL B-4536 / VPI 7372) (Clostridium thermocellum).